Here is a 358-residue protein sequence, read N- to C-terminus: Heterogeneous nuclear ribonucleoprotein A2 homolog 2 (358 aa).

RRM domains lie at 9 to 92 (RKLF…ESAK) and 100 to 179 (KKLF…LSKQ). Disordered stretches follow at residues 182–217 (QDVQ…FRGG) and 333–358 (YGGG…RNRY). The span at 193 to 217 (GNFGFGDSRGGGNFGSGPGGNFRGG) shows a compositional bias: gly residues. The interval 309 to 352 (QQSSSYGPMKSGGNFGGNRSMGGPYGGGNYGPGNGSGASGGGGY) is nuclear targeting sequence.

It is found in the nucleus. Forms complexes (ribonucleosomes) with at least 20 other different hnRNP and heterogeneous nuclear RNA in the nucleus. This chain is Heterogeneous nuclear ribonucleoprotein A2 homolog 2, found in Xenopus laevis (African clawed frog).